A 481-amino-acid chain; its full sequence is Probable myosin light chain kinase DDB_G0284661 (481 aa).

The Protein kinase domain maps to Y13–I269. ATP is bound by residues I19–V27 and K43. Residue D136 is the Proton acceptor of the active site. Disordered regions lie at residues P285–K315 and S345–E427. Residues S379–F421 show a composition bias toward low complexity.

Belongs to the protein kinase superfamily. CAMK Ser/Thr protein kinase family. CaMK subfamily.

The enzyme catalyses L-seryl-[myosin light chain] + ATP = O-phospho-L-seryl-[myosin light chain] + ADP + H(+). The catalysed reaction is L-threonyl-[myosin light chain] + ATP = O-phospho-L-threonyl-[myosin light chain] + ADP + H(+). Its activity is regulated as follows. Does not have a calmodulin-binding domain. Its function is as follows. May phosphorylate a specific serine in the N-terminus of a myosin light chain. The sequence is that of Probable myosin light chain kinase DDB_G0284661 from Dictyostelium discoideum (Social amoeba).